Reading from the N-terminus, the 461-residue chain is Transcription factor GTE3, chloroplastic (461 aa).

Over residues 1-11 (MASGPIAGGGV) the composition is skewed to gly residues. Positions 1–41 (MASGPIAGGGVSKTKHKWSDSGNKSQKRSKPTVANSNSLGL) are disordered. A chloroplast-targeting transit peptide spans 1 to 51 (MASGPIAGGGVSKTKHKWSDSGNKSQKRSKPTVANSNSLGLEDNHQMMKIS). Positions 114 to 220 (KGTVQILKSC…NLFEEKWVPL (107 aa)) constitute a Bromo domain. An NET domain is found at 298-379 (LVEEASANRD…EYKESLSKKK (82 aa)). A compositionally biased stretch (basic and acidic residues) spans 376–392 (SKKKEEQGLDSERDAES). The disordered stretch occupies residues 376 to 461 (SKKKEEQGLD…SSGHESDTGN (86 aa)). Positions 393–412 (FHNSVHESNTLVTGLESSKV) are enriched in polar residues. Positions 429-451 (GGSSSSNSSSSGSGSGSSGSDSD) are enriched in low complexity. Basic and acidic residues predominate over residues 452–461 (SSGHESDTGN).

Interacts with SIZ1 (via PHD domain). In terms of processing, sumoylated by SIZ1. Sumoylation reduces capacity to bind to acetylated histone H3.

The protein resides in the plastid. The protein localises to the chloroplast. In terms of biological role, probable transcription factor that binds to acetylated histone H3. In Arabidopsis thaliana (Mouse-ear cress), this protein is Transcription factor GTE3, chloroplastic (GTE3).